The following is a 183-amino-acid chain: Histone deacetylase complex subunit SAP30L (183 aa).

An N-acetylmethionine modification is found at Met-1. Residues 1 to 10 (MNGFSTEEDS) show a composition bias toward acidic residues. Positions 1–23 (MNGFSTEEDSREGPPAAPAAAAP) are disordered. Cystine bridges form between Cys-29–Cys-30 and Cys-38–Cys-74. The Atypical zinc-finger motif lies at 29-77 (CCLIEDGERCVRPAGNASFSKRVQKSISQKKLKLDIDKSVRHLYICDFH). Lys-49 is covalently cross-linked (Glycyl lysine isopeptide (Lys-Gly) (interchain with G-Cter in SUMO2)). Residues 85-105 (RNKRKRKTSDDGGDSPEHDTD) form a disordered region. Positions 86–91 (NKRKRK) match the Nuclear localization signal (NLS) motif. The tract at residues 88 to 90 (RKR) is important for DNA and phosphoinositide binding. Thr-92 carries the phosphothreonine modification. Phosphoserine occurs at positions 93 and 99. Residue Thr-104 is modified to Phosphothreonine. Residues Lys-155, Lys-166, and Lys-175 each participate in a glycyl lysine isopeptide (Lys-Gly) (interchain with G-Cter in SUMO2) cross-link.

This sequence belongs to the SAP30 family. In terms of assembly, interacts with components of the histone deacetylase complex SIN3A, HDAC1 and HDAC2. Binds histones and nucleosomes. Interacts with FEZ1. As to expression, detected in brain and ovary, and at lower levels in heart, small intestine, lung, kidney, skeletal muscle, stomach and spleen (at protein level). Ubiquitous; expressed in all tissues tested with highest levels in testis.

The protein resides in the nucleus. It is found in the nucleolus. Functions as a transcription repressor, probably via its interaction with histone deacetylase complexes. Involved in the functional recruitment of the class 1 Sin3-histone deacetylase complex (HDAC) to the nucleolus. Binds DNA, apparently without sequence-specificity, and bends bound double-stranded DNA. Binds phosphoinositol phosphates (phosphoinositol 3-phosphate, phosphoinositol 4-phosphate and phosphoinositol 5-phosphate) via the same basic sequence motif that mediates DNA binding and nuclear import. Functionally, functions as a transcription repressor; isoform 2 has lower transcription repressor activity than isoform 1 and isoform 3. Its function is as follows. Functions as a transcription repressor; its activity is marginally lower than that of isoform 1. The polypeptide is Histone deacetylase complex subunit SAP30L (SAP30L) (Homo sapiens (Human)).